The sequence spans 307 residues: Mitogen-activated protein kinase kinase 7 (307 aa).

The region spanning 45–303 is the Protein kinase domain; sequence VEKLHVLGRG…ASQLLGHPFL (259 aa). ATP is bound by residues 51–59 and lysine 74; that span reads LGRGSSGIV. The active-site Proton acceptor is aspartate 165. Phosphoserine is present on residues serine 193 and serine 199. The residue at position 203 (threonine 203) is a Phosphothreonine.

This sequence belongs to the protein kinase superfamily. STE Ser/Thr protein kinase family. MAP kinase kinase subfamily. In terms of assembly, interacts with MPK15. In terms of processing, phosphorylation at Ser-193 and Ser-199 by MAP kinase kinase kinases positively regulates kinase activity. Expressed in all tissues, with a relatively higher level in leaves and lower level in roots and flowers.

The enzyme catalyses L-seryl-[protein] + ATP = O-phospho-L-seryl-[protein] + ADP + H(+). It carries out the reaction L-threonyl-[protein] + ATP = O-phospho-L-threonyl-[protein] + ADP + H(+). It catalyses the reaction L-tyrosyl-[protein] + ATP = O-phospho-L-tyrosyl-[protein] + ADP + H(+). May function as a negative regulator of polar auxin transport. Positively regulates plant basal and systemic acquired resistance (SAR). Activates MPK3 and MPK6 in vitro. The protein is Mitogen-activated protein kinase kinase 7 (MKK7) of Arabidopsis thaliana (Mouse-ear cress).